A 588-amino-acid chain; its full sequence is Adenine deaminase (588 aa).

This sequence belongs to the metallo-dependent hydrolases superfamily. Adenine deaminase family. As to quaternary structure, homodimer. The cofactor is Mn(2+).

It catalyses the reaction adenine + H2O + H(+) = hypoxanthine + NH4(+). The chain is Adenine deaminase from Escherichia coli (strain SE11).